Reading from the N-terminus, the 342-residue chain is MVLSKPTVSSKPIVFSGAQPSGELTIGNYMGALRQWVQMQDDYDCIYCIVDLHAITARQDPALLRKRTLDTLALYLACGIDPKKSTIFVQSHVPEHSQLSWALNCYTYFGELSRMTQFKDKSARYAENINAGLFDYPVLMAADILLYQTNQVPVGEDQKQHLELSRDIASRFNNLYGDIFKIPEPFIPKAGARVMSLQDPTKKMSKSDDNRNNVIELLEDPKSVVKKIKRAMTDSDEPALIRYDVEKKAGVSNLLDILSGVTGQSIPELEAQFTGQMYGHLKGAVADAVSGMLSELQERYRTYREDEALLQDVMREGAAKARARAQVTLAKVYEAIGFVAQP.

ATP contacts are provided by residues 19–21 and 27–28; these read QPS and GN. A 'HIGH' region motif is present at residues 20 to 28; the sequence is PSGELTIGN. L-tryptophan is bound at residue D143. ATP is bound by residues 155-157, V194, and 203-207; these read GED and KMSKS. The short motif at 203–207 is the 'KMSKS' region element; sequence KMSKS.

This sequence belongs to the class-I aminoacyl-tRNA synthetase family. Homodimer.

It localises to the cytoplasm. The enzyme catalyses tRNA(Trp) + L-tryptophan + ATP = L-tryptophyl-tRNA(Trp) + AMP + diphosphate + H(+). Its function is as follows. Catalyzes the attachment of tryptophan to tRNA(Trp). In Yersinia pestis, this protein is Tryptophan--tRNA ligase.